A 450-amino-acid polypeptide reads, in one-letter code: Citrate/malate-proton symporter (450 aa).

Residues 1–32 (MGELQTHMQLQTDTIHEGVRKENWFAKAMNIK) lie on the Cytoplasmic side of the membrane. Residues 33 to 53 (VGIIPLPVYALLFILITVFVM) traverse the membrane as a helical segment. Residues 54 to 64 (HHDVKSDILTS) lie on the Extracellular side of the membrane. The helical transmembrane segment at 65–85 (IAVMAFFGFTFAQIGKSIPIV) threads the bilayer. The Cytoplasmic segment spans residues 86–87 (RS). The chain crosses the membrane as a helical span at residues 88–108 (IGGPAILATFIPSAVVYYHLL). The Extracellular segment spans residues 109-118 (PNDIVKSTTE). The helical transmembrane segment at 119–139 (FTENSNFLYLFIAGIVVGSIL) threads the bilayer. Over 140-152 (GMKRETLVKAFMK) the chain is Cytoplasmic. A helical membrane pass occupies residues 153–173 (IFIPLIVGSVTAAIVGLAVGT). The Extracellular segment spans residues 174-217 (LLGLGFQHTLLYIVIPIMAGGVGEGAIPLSIGYSDIMPISQGEA). The helical transmembrane segment at 218-238 (FALVLPSIMLGSLCAIILAGL) threads the bilayer. Residues 239 to 273 (LNRIGKKKPEWTGNGKVDRSEEESPALEESQSGQQ) lie on the Cytoplasmic side of the membrane. Residues 249–268 (WTGNGKVDRSEEESPALEES) form a disordered region. A helical membrane pass occupies residues 274 to 294 (MFNLSLFASGGILAVSLYLVG). Met295 is a topological domain (extracellular). A helical membrane pass occupies residues 296–316 (LAHDFFGFPAPVAMLLLAVLI). The Cytoplasmic segment spans residues 317–335 (KLFRLVPASIENGAFGVSR). A helical membrane pass occupies residues 336–356 (FFSTAVTYPLLFAIGVSMTPW). Topologically, residues 357 to 364 (DKLVAAFN) are extracellular. The helical transmembrane segment at 365-385 (LSNIITILSVVVTMMAVGFFT) threads the bilayer. Residues 386–428 (GKWLNMYPIETAIINACHSGQGGTGDVAILSAAERLELMPFAQ) lie on the Cytoplasmic side of the membrane. The chain crosses the membrane as a helical span at residues 429-446 (VSTRIGGAITVSLTLLLL). The Extracellular segment spans residues 447–450 (HQFY).

This sequence belongs to the 2-hydroxycarboxylate transporter (2-HCT) (TC 2.A.24) family.

It localises to the cell membrane. It catalyses the reaction citrate(in) + 3 H(+)(in) = citrate(out) + 3 H(+)(out). The enzyme catalyses (S)-malate(in) + 2 H(+)(in) = (S)-malate(out) + 2 H(+)(out). With respect to regulation, the uptake activity is inhibited by divalent metal ions such as Ca(2+), Mg(2+) and Ni(2+). Functionally, proton motive force-driven secondary transporter that catalyzes the uptake of both citrate and malate. Is an electroneutral proton-solute symporter: the number of protons transported is equal to the valence of the transported anions. Translocates the free citrate and malate anions. Citramalate binds to the transporter, but it is not translocated. Is strictly stereoselective, recognizing only the (S)-enantiomers of malate and citramalate. The protein is Citrate/malate-proton symporter of Bacillus subtilis (strain 168).